Consider the following 215-residue polypeptide: Urease accessory protein UreE (215 aa).

A disordered region spans residues 134-215 (FDPEGGAYAP…HGHSHKHDHK (82 aa)). Residues 164-206 (GHHDHADHEHDHKHDHGKHDHAGHDHAHDHHVHDEHCGHDHGH) are compositionally biased toward basic and acidic residues.

This sequence belongs to the UreE family.

Its subcellular location is the cytoplasm. In terms of biological role, involved in urease metallocenter assembly. Binds nickel. Probably functions as a nickel donor during metallocenter assembly. The protein is Urease accessory protein UreE of Rhodopseudomonas palustris (strain HaA2).